The following is a 2200-amino-acid chain: Non-reducing polyketide synthase tpeB (2200 aa).

The region spanning 16-255 (FFGDQTVDTL…MDLPLGTPAH (240 aa)) is the Starter acyltransferase (SAT) domain. The region spanning 382–815 (SNMIAIVGQS…GGNNCVLLEE (434 aa)) is the Ketosynthase family 3 (KS3) domain. Active-site for beta-ketoacyl synthase activity residues include C554, H690, and H729. The Malonyl-CoA:ACP transacylase (MAT) domain occupies 914–1202 (VFAFTGQGSQ…VLNSFIKATL (289 aa)). The interval 1296–1621 (TASLQRVREE…TKRILTTILG (326 aa)) is product template (PT) domain. Residues 1300 to 1433 (QRVREERIQG…CKIRFESKAD (134 aa)) form an N-terminal hotdog fold region. One can recognise a PKS/mFAS DH domain in the interval 1300-1617 (QRVREERIQG…FQRLTKRILT (318 aa)). H1332 functions as the Proton acceptor; for dehydratase activity in the catalytic mechanism. The tract at residues 1462-1617 (NGHKLPKPVV…FQRLTKRILT (156 aa)) is C-terminal hotdog fold. D1522 (proton donor; for dehydratase activity) is an active-site residue. Residues 1625-1652 (DHHNSNEVRNGNATTTHTNPPAHATTQS) are disordered. Positions 1636 to 1650 (NATTTHTNPPAHATT) are enriched in low complexity. Carrier domains lie at 1671–1748 (TVGE…AELP) and 1791–1865 (ANYA…GPNT). 2 positions are modified to O-(pantetheine 4'-phosphoryl)serine: S1708 and S1825. Residues 1931–2173 (MFFLPDGTGY…TVPCDHLSIM (243 aa)) form a thioesterase (TE) domain region.

It depends on pantetheine 4'-phosphate as a cofactor.

The protein operates within secondary metabolite biosynthesis. Functionally, non-reducing polyketide synthase; part of the gene cluster that mediates the biosynthesis of polyesters containing 2,4-dihydroxy-6-(2-hydroxypropyl)benzoate and 3-hydroxybutyrate moieties, such as talapolyester G, 15G256beta and 15G256beta-2; as well as to oxidized derivatives such as 15G256alpha. The biosynthesis of the polyesters probably starts with the formation of the diketide 3-hydroxybutyryl-S-ACP catalyzed by the partially reducing polyketide synthase tpeA. The acceptance of 3-hydroxybutyryl by the non-reducing polyketide synthase tpeB would initiate further elongation and cyclization, catalyzed by KS and PT, respectively, to form 2,4-dihydroxy-6-(2-hydroxyn-propyl)benzoyl-S-ACP intermediate. The TE domain could catalyze lactonization at this step to yield 6-hydroxymellein as a derailment product. The polyesterification process maybe occurs when additional molecules of 3-hydroxybutyryl are transferred to tpeB. Following the first esterification step, an intramolecular cyclization catalyzed by the TE domain of tpeB would give talarodioxadione 1, whereas the ethyl esterification of talapolyester G perhaps happens spontaneously. Further oxidation by the cytochrome P450 monooxygenase tpeC then leads to the formation of oxidized derivatives. The sequence is that of Non-reducing polyketide synthase tpeB from Talaromyces stipitatus (strain ATCC 10500 / CBS 375.48 / QM 6759 / NRRL 1006) (Penicillium stipitatum).